Consider the following 340-residue polypeptide: UDP-3-O-acylglucosamine N-acyltransferase (340 aa).

Catalysis depends on His237, which acts as the Proton acceptor.

It belongs to the transferase hexapeptide repeat family. LpxD subfamily. As to quaternary structure, homotrimer.

The catalysed reaction is a UDP-3-O-[(3R)-3-hydroxyacyl]-alpha-D-glucosamine + a (3R)-hydroxyacyl-[ACP] = a UDP-2-N,3-O-bis[(3R)-3-hydroxyacyl]-alpha-D-glucosamine + holo-[ACP] + H(+). It participates in bacterial outer membrane biogenesis; LPS lipid A biosynthesis. In terms of biological role, catalyzes the N-acylation of UDP-3-O-acylglucosamine using 3-hydroxyacyl-ACP as the acyl donor. Is involved in the biosynthesis of lipid A, a phosphorylated glycolipid that anchors the lipopolysaccharide to the outer membrane of the cell. This is UDP-3-O-acylglucosamine N-acyltransferase from Desulfosudis oleivorans (strain DSM 6200 / JCM 39069 / Hxd3) (Desulfococcus oleovorans).